A 655-amino-acid polypeptide reads, in one-letter code: HDA1 complex subunit 3 (655 aa).

The stretch at 482 to 632 (HELEVENNLK…KTMDNLENLT (151 aa)) forms a coiled coil. Residues 635–655 (RVRTQNGNTKKKSRAKKPGNV) are disordered. Residues 643 to 655 (TKKKSRAKKPGNV) show a composition bias toward basic residues.

Belongs to the HDA2/3 family. HDA3 subfamily. In terms of assembly, heterodimer with HDA2. Component of the HDA1 histone deacetylase complex composed of at least one HDA1 homodimer and one HDA2/HDA3 heterodimer. Interacts with HDA1 and HDA3.

It is found in the nucleus. In terms of biological role, required for activity of HDA1 histone deacetylase complex. The HDA1 histone deacetylase complex is responsible for the deacetylation of lysine residues on the N-terminal part of the core histones (H2A, H2B, H3 and H4). Histone deacetylation gives a tag for epigenetic repression and plays an important role in transcriptional regulation, cell cycle progression and developmental events. The protein is HDA1 complex subunit 3 (HDA3) of Saccharomyces cerevisiae (strain ATCC 204508 / S288c) (Baker's yeast).